The chain runs to 34 residues: Photosystem II reaction center protein M (34 aa).

The chain crosses the membrane as a helical span at residues 7–27 (GFLATLLFVAVPMLFLIGLYI).

This sequence belongs to the PsbM family. PSII is composed of 1 copy each of membrane proteins PsbA, PsbB, PsbC, PsbD, PsbE, PsbF, PsbH, PsbI, PsbJ, PsbK, PsbL, PsbM, PsbT, PsbX, PsbY, Psb30/Ycf12, peripheral proteins PsbO, CyanoQ (PsbQ), PsbU, PsbV and a large number of cofactors. It forms dimeric complexes.

The protein resides in the cellular thylakoid membrane. In terms of biological role, one of the components of the core complex of photosystem II (PSII). PSII is a light-driven water:plastoquinone oxidoreductase that uses light energy to abstract electrons from H(2)O, generating O(2) and a proton gradient subsequently used for ATP formation. It consists of a core antenna complex that captures photons, and an electron transfer chain that converts photonic excitation into a charge separation. This subunit is found at the monomer-monomer interface. This chain is Photosystem II reaction center protein M, found in Prochlorococcus marinus (strain MIT 9303).